The following is a 397-amino-acid chain: MNFNKFYNKFHDEPIDCENFPDIGQIKSTSVGSGGSDNIVLIVVQDNIKYAVKIIPTLFYPKYKEQPNDDQMEIKFYQFFTKRYILTDRTPHIVGIYKCKTCDNIRDFLLKIKPKKSCPTFEEKLLKKVQYTQFENQLCNLLLYGENKLMDSKFIMALLEYCDFDFSRYLRDLLQNVYQNNFGNNIGEFFYELTRILFQIIFTLAIIQDDYPGFQHSDLFIRNILISITDKYTDNEYVAYYYKQKIFYLPANGIYAKINDFGTSIIVNELESNTYIYDKQTNKIFHKNPFNHKNDIYNLLIDIYFAFDEYIIENKLDESKINPIINFMDKFIDIETINKIFEINYYQLKDTWYIDGISVLENTIKTPHDYIMSDVFEVFQDLPANAKIIRHFNSPRL.

In terms of domain architecture, Protein kinase spans 25–397; it reads QIKSTSVGSG…IIRHFNSPRL (373 aa). ATP is bound by residues 31–39 and lysine 53; that span reads VGSGGSDNI. Catalysis depends on aspartate 218, which acts as the Proton acceptor.

It belongs to the protein kinase superfamily. Ser/Thr protein kinase family.

Its subcellular location is the virion. The enzyme catalyses L-seryl-[protein] + ATP = O-phospho-L-seryl-[protein] + ADP + H(+). The catalysed reaction is L-threonyl-[protein] + ATP = O-phospho-L-threonyl-[protein] + ADP + H(+). The sequence is that of Putative serine/threonine-protein kinase R301 from Acanthamoeba polyphaga (Amoeba).